The chain runs to 314 residues: DNA-directed RNA polymerase subunit alpha (314 aa).

Residues 1–229 are alpha N-terminal domain (alpha-NTD); that stretch reads MLESKLKAPV…EHLNYFANPE (229 aa). Positions 246 to 314 are alpha C-terminal domain (alpha-CTD); it reads SAEEDLDLPL…LAKKGFTLKE (69 aa).

Belongs to the RNA polymerase alpha chain family. Homodimer. The RNAP catalytic core consists of 2 alpha, 1 beta, 1 beta' and 1 omega subunit. When a sigma factor is associated with the core the holoenzyme is formed, which can initiate transcription.

It carries out the reaction RNA(n) + a ribonucleoside 5'-triphosphate = RNA(n+1) + diphosphate. In terms of biological role, DNA-dependent RNA polymerase catalyzes the transcription of DNA into RNA using the four ribonucleoside triphosphates as substrates. This is DNA-directed RNA polymerase subunit alpha (rpoA) from Thermus aquaticus.